A 1017-amino-acid chain; its full sequence is Anaphase-promoting complex subunit 5 (1017 aa).

TPR repeat units lie at residues 30–63 (KQSL…EKEL), 182–214 (DMSM…SPLD), 252–286 (VKRV…VNGQ), 337–370 (PYAV…AQER), and 508–541 (NNNN…WNDI). Residues 451 to 525 (INSNNYNSNN…NNNSSNSNNN (75 aa)) show a composition bias toward low complexity. Disordered regions lie at residues 451–527 (INSN…NNGG) and 617–636 (NNNN…QQQN). TPR repeat units lie at residues 642-675 (LLSF…YKTQ), 756-790 (VICY…SRDF), 838-871 (ADSN…VLSD), 876-908 (SQLY…FLQL), and 931-964 (KEIY…LVPS).

This sequence belongs to the APC5 family. In terms of assembly, the APC/C is composed of at least 13 subunits that stay tightly associated throughout the cell cycle: anapc1, anapc2, anapc3, anapc4, anapc5, anapc6, anapc7, anapc8, anapc10, anapc11, cdc20, cdc26 and cdh1.

The protein resides in the nucleus. Its pathway is protein modification; protein ubiquitination. In terms of biological role, component of the anaphase promoting complex/cyclosome (APC/C), a cell cycle-regulated E3 ubiquitin-protein ligase complex that controls progression through mitosis and the G1 phase of the cell cycle. The sequence is that of Anaphase-promoting complex subunit 5 (anapc5) from Dictyostelium discoideum (Social amoeba).